The chain runs to 361 residues: D-alanine--D-alanine ligase (361 aa).

Positions 144–350 (KLAAADAGLA…FMELTDRLIR (207 aa)) constitute an ATP-grasp domain. 177-232 (VASLSFPMFVKPVSLGSSVGITKVNSESELAEAITHACSLDSKVLIEQAVKGREVE) provides a ligand contact to ATP. Mg(2+)-binding residues include Asp303, Glu317, and Asn319.

It belongs to the D-alanine--D-alanine ligase family. It depends on Mg(2+) as a cofactor. Mn(2+) is required as a cofactor.

Its subcellular location is the cytoplasm. It catalyses the reaction 2 D-alanine + ATP = D-alanyl-D-alanine + ADP + phosphate + H(+). The protein operates within cell wall biogenesis; peptidoglycan biosynthesis. Cell wall formation. The protein is D-alanine--D-alanine ligase of Chlorobium luteolum (strain DSM 273 / BCRC 81028 / 2530) (Pelodictyon luteolum).